The primary structure comprises 146 residues: Cytochrome c oxidase subunit 5A, mitochondrial (146 aa).

The transit peptide at 1 to 37 (MLAAALRRCTAAAAARGLLHPVSAPSPAAAVCSIRCY) directs the protein to the mitochondrion. Residues 2-16 (LAAALRRCTAAAAAR) carry the SIFI-degron motif. Lys83 and Lys109 each carry N6-acetyllysine. Thr137 is subject to Phosphothreonine.

Component of the cytochrome c oxidase (complex IV, CIV), a multisubunit enzyme composed of 14 subunits. The complex is composed of a catalytic core of 3 subunits MT-CO1, MT-CO2 and MT-CO3, encoded in the mitochondrial DNA, and 11 supernumerary subunits COX4I, COX5A, COX5B, COX6A, COX6B, COX6C, COX7A, COX7B, COX7C, COX8 and NDUFA4, which are encoded in the nuclear genome. The complex exists as a monomer or a dimer and forms supercomplexes (SCs) in the inner mitochondrial membrane with NADH-ubiquinone oxidoreductase (complex I, CI) and ubiquinol-cytochrome c oxidoreductase (cytochrome b-c1 complex, complex III, CIII), resulting in different assemblies (supercomplex SCI(1)III(2)IV(1) and megacomplex MCI(2)III(2)IV(2)). Interacts with AFG1L. Interacts with RAB5IF. In response to mitochondrial stress, the precursor protein is ubiquitinated by the SIFI complex in the cytoplasm before mitochondrial import, leading to its degradation. Within the SIFI complex, UBR4 initiates ubiquitin chain that are further elongated or branched by KCMF1. In terms of tissue distribution, expressed in the head of epididymal sperm but not in testicular sperm (at protein level).

It localises to the mitochondrion inner membrane. It functions in the pathway energy metabolism; oxidative phosphorylation. Component of the cytochrome c oxidase, the last enzyme in the mitochondrial electron transport chain which drives oxidative phosphorylation. The respiratory chain contains 3 multisubunit complexes succinate dehydrogenase (complex II, CII), ubiquinol-cytochrome c oxidoreductase (cytochrome b-c1 complex, complex III, CIII) and cytochrome c oxidase (complex IV, CIV), that cooperate to transfer electrons derived from NADH and succinate to molecular oxygen, creating an electrochemical gradient over the inner membrane that drives transmembrane transport and the ATP synthase. Cytochrome c oxidase is the component of the respiratory chain that catalyzes the reduction of oxygen to water. Electrons originating from reduced cytochrome c in the intermembrane space (IMS) are transferred via the dinuclear copper A center (CU(A)) of subunit 2 and heme A of subunit 1 to the active site in subunit 1, a binuclear center (BNC) formed by heme A3 and copper B (CU(B)). The BNC reduces molecular oxygen to 2 water molecules using 4 electrons from cytochrome c in the IMS and 4 protons from the mitochondrial matrix. This chain is Cytochrome c oxidase subunit 5A, mitochondrial (Cox5a), found in Rattus norvegicus (Rat).